The following is a 227-amino-acid chain: 7-cyano-7-deazaguanine synthase (227 aa).

16 to 26 (FSGGQDSTTCL) is an ATP binding site. The Zn(2+) site is built by cysteine 194, cysteine 202, cysteine 205, and cysteine 208.

It belongs to the QueC family. The cofactor is Zn(2+).

The catalysed reaction is 7-carboxy-7-deazaguanine + NH4(+) + ATP = 7-cyano-7-deazaguanine + ADP + phosphate + H2O + H(+). It participates in purine metabolism; 7-cyano-7-deazaguanine biosynthesis. In terms of biological role, catalyzes the ATP-dependent conversion of 7-carboxy-7-deazaguanine (CDG) to 7-cyano-7-deazaguanine (preQ(0)). The protein is 7-cyano-7-deazaguanine synthase of Haemophilus influenzae (strain 86-028NP).